The sequence spans 334 residues: Holliday junction branch migration complex subunit RuvB (334 aa).

A large ATPase domain (RuvB-L) region spans residues 4 to 184 (ADRIISPNAT…FGIVQRLEFY (181 aa)). Residues Ile23, Arg24, Gly65, Lys68, Thr69, Thr70, 131–133 (EDY), Arg174, Tyr184, and Arg221 each bind ATP. Thr69 provides a ligand contact to Mg(2+). Residues 185 to 255 (SVEDLRHIVA…VADKALNMLN (71 aa)) are small ATPAse domain (RuvB-S). The head domain (RuvB-H) stretch occupies residues 258–334 (LHGFDHMDRR…YNHFGLTMPE (77 aa)). The DNA site is built by Arg313 and Arg318.

It belongs to the RuvB family. Homohexamer. Forms an RuvA(8)-RuvB(12)-Holliday junction (HJ) complex. HJ DNA is sandwiched between 2 RuvA tetramers; dsDNA enters through RuvA and exits via RuvB. An RuvB hexamer assembles on each DNA strand where it exits the tetramer. Each RuvB hexamer is contacted by two RuvA subunits (via domain III) on 2 adjacent RuvB subunits; this complex drives branch migration. In the full resolvosome a probable DNA-RuvA(4)-RuvB(12)-RuvC(2) complex forms which resolves the HJ.

The protein resides in the cytoplasm. The catalysed reaction is ATP + H2O = ADP + phosphate + H(+). The RuvA-RuvB-RuvC complex processes Holliday junction (HJ) DNA during genetic recombination and DNA repair, while the RuvA-RuvB complex plays an important role in the rescue of blocked DNA replication forks via replication fork reversal (RFR). RuvA specifically binds to HJ cruciform DNA, conferring on it an open structure. The RuvB hexamer acts as an ATP-dependent pump, pulling dsDNA into and through the RuvAB complex. RuvB forms 2 homohexamers on either side of HJ DNA bound by 1 or 2 RuvA tetramers; 4 subunits per hexamer contact DNA at a time. Coordinated motions by a converter formed by DNA-disengaged RuvB subunits stimulates ATP hydrolysis and nucleotide exchange. Immobilization of the converter enables RuvB to convert the ATP-contained energy into a lever motion, pulling 2 nucleotides of DNA out of the RuvA tetramer per ATP hydrolyzed, thus driving DNA branch migration. The RuvB motors rotate together with the DNA substrate, which together with the progressing nucleotide cycle form the mechanistic basis for DNA recombination by continuous HJ branch migration. Branch migration allows RuvC to scan DNA until it finds its consensus sequence, where it cleaves and resolves cruciform DNA. The polypeptide is Holliday junction branch migration complex subunit RuvB (Hahella chejuensis (strain KCTC 2396)).